A 284-amino-acid polypeptide reads, in one-letter code: Shikimate dehydrogenase (NADP(+)) (284 aa).

Shikimate-binding positions include 20–22 and Ser-67; that span reads SIS. Residue Lys-71 is the Proton acceptor of the active site. Asp-83 serves as a coordination point for NADP(+). Positions 92 and 107 each coordinate shikimate. NADP(+) contacts are provided by residues 129-133 and Ile-227; that span reads GAGGA. Residue Tyr-229 coordinates shikimate. Gly-250 is a binding site for NADP(+).

This sequence belongs to the shikimate dehydrogenase family. As to quaternary structure, homodimer.

It catalyses the reaction shikimate + NADP(+) = 3-dehydroshikimate + NADPH + H(+). It functions in the pathway metabolic intermediate biosynthesis; chorismate biosynthesis; chorismate from D-erythrose 4-phosphate and phosphoenolpyruvate: step 4/7. Its function is as follows. Involved in the biosynthesis of the chorismate, which leads to the biosynthesis of aromatic amino acids. Catalyzes the reversible NADPH linked reduction of 3-dehydroshikimate (DHSA) to yield shikimate (SA). This Streptococcus pneumoniae (strain Taiwan19F-14) protein is Shikimate dehydrogenase (NADP(+)).